Consider the following 370-residue polypeptide: Histidinol-phosphate aminotransferase 1 (370 aa).

Position 222 is an N6-(pyridoxal phosphate)lysine (lysine 222).

It belongs to the class-II pyridoxal-phosphate-dependent aminotransferase family. Histidinol-phosphate aminotransferase subfamily. As to quaternary structure, homodimer. The cofactor is pyridoxal 5'-phosphate.

The catalysed reaction is L-histidinol phosphate + 2-oxoglutarate = 3-(imidazol-4-yl)-2-oxopropyl phosphate + L-glutamate. The protein operates within amino-acid biosynthesis; L-histidine biosynthesis; L-histidine from 5-phospho-alpha-D-ribose 1-diphosphate: step 7/9. The protein is Histidinol-phosphate aminotransferase 1 (hisC1) of Bacillus cereus (strain ATCC 14579 / DSM 31 / CCUG 7414 / JCM 2152 / NBRC 15305 / NCIMB 9373 / NCTC 2599 / NRRL B-3711).